The chain runs to 372 residues: Queuine tRNA-ribosyltransferase (372 aa).

The Proton acceptor role is filled by Asp-89. Residues Asp-89–Phe-93, Asp-161, and Gly-232 contribute to the substrate site. Residues Gly-262–Ser-268 form an RNA binding region. The active-site Nucleophile is Asp-281. Residues Thr-286–Arg-290 are RNA binding; important for wobble base 34 recognition. Zn(2+)-binding residues include Cys-319, Cys-321, Cys-324, and His-351.

This sequence belongs to the queuine tRNA-ribosyltransferase family. In terms of assembly, homodimer. Within each dimer, one monomer is responsible for RNA recognition and catalysis, while the other monomer binds to the replacement base PreQ1. Zn(2+) is required as a cofactor.

It carries out the reaction 7-aminomethyl-7-carbaguanine + guanosine(34) in tRNA = 7-aminomethyl-7-carbaguanosine(34) in tRNA + guanine. Its pathway is tRNA modification; tRNA-queuosine biosynthesis. Its function is as follows. Catalyzes the base-exchange of a guanine (G) residue with the queuine precursor 7-aminomethyl-7-deazaguanine (PreQ1) at position 34 (anticodon wobble position) in tRNAs with GU(N) anticodons (tRNA-Asp, -Asn, -His and -Tyr). Catalysis occurs through a double-displacement mechanism. The nucleophile active site attacks the C1' of nucleotide 34 to detach the guanine base from the RNA, forming a covalent enzyme-RNA intermediate. The proton acceptor active site deprotonates the incoming PreQ1, allowing a nucleophilic attack on the C1' of the ribose to form the product. After dissociation, two additional enzymatic reactions on the tRNA convert PreQ1 to queuine (Q), resulting in the hypermodified nucleoside queuosine (7-(((4,5-cis-dihydroxy-2-cyclopenten-1-yl)amino)methyl)-7-deazaguanosine). In Chlamydia trachomatis serovar A (strain ATCC VR-571B / DSM 19440 / HAR-13), this protein is Queuine tRNA-ribosyltransferase.